We begin with the raw amino-acid sequence, 160 residues long: uncharacterized protein (160 aa).

Over 1–33 (MPLRPCRHHQGFLPKKQWRAKFPQLIVLMGRVA) the chain is Extracellular. The helical transmembrane segment at 34–54 (AEELLPAVAVAAVVVAVVVAV) threads the bilayer. Residues 55–68 (ERVVPLLFVHRPDS) are Cytoplasmic-facing. A helical transmembrane segment spans residues 69 to 89 (FFLIFFFQSCFVCCCCCCSCS). Over 90–119 (TSLKAYSSEKEKQKYGKRGNGNTPLVQRLV) the chain is Extracellular. Residues 120 to 140 (TLSYLALLILVLSIELLTWFV) traverse the membrane as a helical segment. The Cytoplasmic portion of the chain corresponds to 141–160 (KKQRTGNKKQKDKEKNALLL).

It localises to the membrane. This is an uncharacterized protein from Saccharomyces cerevisiae (strain ATCC 204508 / S288c) (Baker's yeast).